Reading from the N-terminus, the 425-residue chain is MQQTFFKDPILGEIIFDENTKWMYELVNTKAFQRLRNIKQLGINFHFYPSGVHTRYAHSLGVYELIRRILNSSAFLNIDQIKKQTVLVAGLLHDLGHGPHSHAFEIYFAKNPDFKKQLFIHEKVTSMLVNSEPIVSILKANKIDPNLIGALIDENQNIQPINWWMRQLISSDLDTDRMDYLLRDAYFTGTSHSLVDYQSIINGMECVDNQGTYEIVFQEKCLPFIENFLITRHHMYQSIYSDGRSIATELNLWFVFQRIKALIEEDNFNFHNFKNVESVIKPLLKNQLFKKSLLTCFVKLDDYVFHSFLVNTFETTKDAILKTLLDSYLNTLKFQVKFYESCEKRDLDFELKVKEYQTPSYFITKFNNQFKGFYEGWNKHKNELKIKTSQNKIKNLSEISMLVKRSNELFFENSFYRWANVFYQN.

In terms of domain architecture, HD spans 55-181 (RYAHSLGVYE…DLDTDRMDYL (127 aa)).

This is an uncharacterized protein from Mycoplasma genitalium (strain ATCC 33530 / DSM 19775 / NCTC 10195 / G37) (Mycoplasmoides genitalium).